The sequence spans 318 residues: Methionyl-tRNA formyltransferase (318 aa).

Residue 114–117 (SLLP) coordinates (6S)-5,6,7,8-tetrahydrofolate.

Belongs to the Fmt family.

It catalyses the reaction L-methionyl-tRNA(fMet) + (6R)-10-formyltetrahydrofolate = N-formyl-L-methionyl-tRNA(fMet) + (6S)-5,6,7,8-tetrahydrofolate + H(+). Its function is as follows. Attaches a formyl group to the free amino group of methionyl-tRNA(fMet). The formyl group appears to play a dual role in the initiator identity of N-formylmethionyl-tRNA by promoting its recognition by IF2 and preventing the misappropriation of this tRNA by the elongation apparatus. The polypeptide is Methionyl-tRNA formyltransferase (Protochlamydia amoebophila (strain UWE25)).